Consider the following 204-residue polypeptide: MIKKTTSFRLAIFGGSFDPIHYGHLICAMDCLEQISLNKIIFMPCSRSPFKKQNPVASALQRLEMIQLAIKPFKNFEVSSFEVQSPAPSYSIRTVQEFHKLYPHAELFWIIGSDQVPGLPRWKDYAELIQIVKFIVVSRSNYYPYEKRDYLVPLPKIRYVDISSTEIRERVKKELPIFHLLPQAVFQYIKENSIYIPNRTVHEK.

It belongs to the NadD family.

It carries out the reaction nicotinate beta-D-ribonucleotide + ATP + H(+) = deamido-NAD(+) + diphosphate. The protein operates within cofactor biosynthesis; NAD(+) biosynthesis; deamido-NAD(+) from nicotinate D-ribonucleotide: step 1/1. In terms of biological role, catalyzes the reversible adenylation of nicotinate mononucleotide (NaMN) to nicotinic acid adenine dinucleotide (NaAD). The chain is Probable nicotinate-nucleotide adenylyltransferase from Methylacidiphilum infernorum (isolate V4) (Methylokorus infernorum (strain V4)).